The following is a 365-amino-acid chain: 1-aminocyclopropane-1-carboxylate oxidase homolog 9 (365 aa).

One can recognise a Fe2OG dioxygenase domain in the interval 214-313; sequence KGLLMLCHYY…RISVACFVSS (100 aa). Fe cation contacts are provided by His238, Asp240, and His294. Arg304 lines the 2-oxoglutarate pocket.

The protein belongs to the iron/ascorbate-dependent oxidoreductase family. It depends on Fe(2+) as a cofactor.

This chain is 1-aminocyclopropane-1-carboxylate oxidase homolog 9, found in Arabidopsis thaliana (Mouse-ear cress).